The following is a 228-amino-acid chain: Endonuclease V (228 aa).

Mg(2+) contacts are provided by D43 and D109.

The protein belongs to the endonuclease V family. Mg(2+) is required as a cofactor.

Its subcellular location is the cytoplasm. The catalysed reaction is Endonucleolytic cleavage at apurinic or apyrimidinic sites to products with a 5'-phosphate.. Functionally, DNA repair enzyme involved in the repair of deaminated bases. Selectively cleaves double-stranded DNA at the second phosphodiester bond 3' to a deoxyinosine leaving behind the intact lesion on the nicked DNA. This is Endonuclease V from Dictyoglomus turgidum (strain DSM 6724 / Z-1310).